A 559-amino-acid chain; its full sequence is Putative protease Do-like 3, mitochondrial (559 aa).

The transit peptide at 1-48 (MSFLCVRTVSRFRSLSRALAPGFLLLHGNAVPKTAVFFRQQSSNTRLF) directs the protein to the mitochondrion. Residues 59 to 81 (ENNSKSALKNKLPPGKEVSSKDA) form a disordered region. The interval 100-292 (VFTVSSKPRL…FLNAIEESGE (193 aa)) is serine protease. Residues histidine 138, aspartate 169, and serine 247 each act as charge relay system in the active site. The 81-residue stretch at 300–380 (NLTYQKMDND…HLVSMKKPCE (81 aa)) folds into the PDZ domain. The tract at residues 538 to 559 (SEDLQPKQQNKRSKVPPKSKEH) is disordered. A compositionally biased stretch (basic residues) spans 546 to 559 (QNKRSKVPPKSKEH).

Belongs to the peptidase S1C family.

The protein resides in the mitochondrion matrix. Putative serine protease. In Arabidopsis thaliana (Mouse-ear cress), this protein is Putative protease Do-like 3, mitochondrial (DEGP3).